Here is a 475-residue protein sequence, read N- to C-terminus: Glycogen synthase (475 aa).

Lysine 15 contributes to the ADP-alpha-D-glucose binding site.

This sequence belongs to the glycosyltransferase 1 family. Bacterial/plant glycogen synthase subfamily.

The catalysed reaction is [(1-&gt;4)-alpha-D-glucosyl](n) + ADP-alpha-D-glucose = [(1-&gt;4)-alpha-D-glucosyl](n+1) + ADP + H(+). It participates in glycan biosynthesis; glycogen biosynthesis. Functionally, synthesizes alpha-1,4-glucan chains using ADP-glucose. The sequence is that of Glycogen synthase from Chlamydia caviae (strain ATCC VR-813 / DSM 19441 / 03DC25 / GPIC) (Chlamydophila caviae).